Consider the following 331-residue polypeptide: Pantothenate kinase (331 aa).

Residue 109 to 116 (GSVAVGKS) coordinates ATP.

This sequence belongs to the prokaryotic pantothenate kinase family.

The protein localises to the cytoplasm. It catalyses the reaction (R)-pantothenate + ATP = (R)-4'-phosphopantothenate + ADP + H(+). It participates in cofactor biosynthesis; coenzyme A biosynthesis; CoA from (R)-pantothenate: step 1/5. In Rhizobium etli (strain CIAT 652), this protein is Pantothenate kinase.